The sequence spans 334 residues: Glycerol-3-phosphate dehydrogenase [NAD(P)+] (334 aa).

NADPH is bound by residues W13, R33, and K106. Positions 106, 137, and 139 each coordinate sn-glycerol 3-phosphate. A141 lines the NADPH pocket. The sn-glycerol 3-phosphate site is built by K192, D245, S255, R256, and N257. K192 acts as the Proton acceptor in catalysis. Position 256 (R256) interacts with NADPH. V280 and E282 together coordinate NADPH.

It belongs to the NAD-dependent glycerol-3-phosphate dehydrogenase family.

Its subcellular location is the cytoplasm. The enzyme catalyses sn-glycerol 3-phosphate + NAD(+) = dihydroxyacetone phosphate + NADH + H(+). It carries out the reaction sn-glycerol 3-phosphate + NADP(+) = dihydroxyacetone phosphate + NADPH + H(+). The protein operates within membrane lipid metabolism; glycerophospholipid metabolism. Functionally, catalyzes the reduction of the glycolytic intermediate dihydroxyacetone phosphate (DHAP) to sn-glycerol 3-phosphate (G3P), the key precursor for phospholipid synthesis. The sequence is that of Glycerol-3-phosphate dehydrogenase [NAD(P)+] from Chlamydia trachomatis serovar A (strain ATCC VR-571B / DSM 19440 / HAR-13).